Here is a 139-residue protein sequence, read N- to C-terminus: ATP synthase epsilon chain (139 aa).

It belongs to the ATPase epsilon chain family. As to quaternary structure, F-type ATPases have 2 components, CF(1) - the catalytic core - and CF(0) - the membrane proton channel. CF(1) has five subunits: alpha(3), beta(3), gamma(1), delta(1), epsilon(1). CF(0) has three main subunits: a, b and c.

The protein localises to the cell inner membrane. Functionally, produces ATP from ADP in the presence of a proton gradient across the membrane. In Actinobacillus pleuropneumoniae serotype 5b (strain L20), this protein is ATP synthase epsilon chain.